The primary structure comprises 254 residues: Phosphate import ATP-binding protein PstB (254 aa).

One can recognise an ABC transporter domain in the interval 7-249 (MVAESMSFYY…PREKQTEDYI (243 aa)). 39–46 (GPSGCGKS) contributes to the ATP binding site.

The protein belongs to the ABC transporter superfamily. Phosphate importer (TC 3.A.1.7) family. In terms of assembly, the complex is composed of two ATP-binding proteins (PstB), two transmembrane proteins (PstC and PstA) and a solute-binding protein (PstS).

The protein resides in the cell inner membrane. It carries out the reaction phosphate(out) + ATP + H2O = ADP + 2 phosphate(in) + H(+). Functionally, part of the ABC transporter complex PstSACB involved in phosphate import. Responsible for energy coupling to the transport system. The sequence is that of Phosphate import ATP-binding protein PstB from Chlorobium chlorochromatii (strain CaD3).